The following is a 605-amino-acid chain: ABC transporter E family member 2 (605 aa).

The 4Fe-4S ferredoxin-type domain occupies 46 to 75 (KLAFISEELCIGCGICVKKCPFEAIQIINL). 2 ABC transporter domains span residues 70 to 315 (IQII…FLAG) and 344 to 568 (IQSY…LSHL). ATP contacts are provided by residues 110 to 117 (GTNGIGKS) and 381 to 388 (GENGTGKT).

This sequence belongs to the ABC transporter superfamily. ABCE family. As to expression, expressed in roots, stems, leaves, flowers and siliques.

The protein localises to the membrane. The chain is ABC transporter E family member 2 (ABCE2) from Arabidopsis thaliana (Mouse-ear cress).